The primary structure comprises 144 residues: 3-hydroxyacyl-[acyl-carrier-protein] dehydratase FabZ (144 aa).

Residue histidine 49 is part of the active site.

Belongs to the thioester dehydratase family. FabZ subfamily.

The protein localises to the cytoplasm. The catalysed reaction is a (3R)-hydroxyacyl-[ACP] = a (2E)-enoyl-[ACP] + H2O. Involved in unsaturated fatty acids biosynthesis. Catalyzes the dehydration of short chain beta-hydroxyacyl-ACPs and long chain saturated and unsaturated beta-hydroxyacyl-ACPs. The chain is 3-hydroxyacyl-[acyl-carrier-protein] dehydratase FabZ from Clostridium kluyveri (strain NBRC 12016).